Consider the following 67-residue polypeptide: DNA-directed RNA polymerase subunit omega (67 aa).

The protein belongs to the RNA polymerase subunit omega family. As to quaternary structure, the RNAP catalytic core consists of 2 alpha, 1 beta, 1 beta' and 1 omega subunit. When a sigma factor is associated with the core the holoenzyme is formed, which can initiate transcription.

The enzyme catalyses RNA(n) + a ribonucleoside 5'-triphosphate = RNA(n+1) + diphosphate. Promotes RNA polymerase assembly. Latches the N- and C-terminal regions of the beta' subunit thereby facilitating its interaction with the beta and alpha subunits. The protein is DNA-directed RNA polymerase subunit omega of Ralstonia pickettii (strain 12J).